Reading from the N-terminus, the 242-residue chain is Host range factor p28 (242 aa).

One can recognise a KilA-N domain in the interval 21 to 131 (YIDEPNDIRL…QSILRGLVNW (111 aa)). The RING-type zinc-finger motif lies at 173–226 (CGICYEVVYSKRLENDRYFGLLDSCNHIFCITCINIWHRTRRETGASDNCPICR).

This sequence belongs to the orthopoxvirus OPG021 family.

The protein localises to the host cytoplasm. It catalyses the reaction S-ubiquitinyl-[E2 ubiquitin-conjugating enzyme]-L-cysteine + [acceptor protein]-L-lysine = [E2 ubiquitin-conjugating enzyme]-L-cysteine + N(6)-ubiquitinyl-[acceptor protein]-L-lysine.. In terms of biological role, RING-finger E3 ubiquitin ligase which catalyzes the formation of both 'Lys-48'- and 'Lys-63'-linked polyubiquitin chains. Plays an important role in virulence by acting as an anti-apoptotic factor. The protein is Host range factor p28 (OPG021) of Bos taurus (Bovine).